A 111-amino-acid polypeptide reads, in one-letter code: U-scoloptoxin(16)-Er8a (111 aa).

The N-terminal stretch at 1 to 26 (MTSTRKLSVSCLIVFMVSSLIAVSSG) is a signal peptide.

This sequence belongs to the scoloptoxin-16 family. In terms of processing, contains 4 disulfide bonds. As to expression, expressed by the venom gland.

The protein resides in the secreted. The protein is U-scoloptoxin(16)-Er8a of Ethmostigmus rubripes (Giant centipede).